We begin with the raw amino-acid sequence, 357 residues long: Heat-inducible transcription repressor HrcA (357 aa).

Belongs to the HrcA family.

In terms of biological role, negative regulator of class I heat shock genes (grpE-dnaK-dnaJ and groELS operons). Prevents heat-shock induction of these operons. The protein is Heat-inducible transcription repressor HrcA of Ureaplasma parvum serovar 3 (strain ATCC 27815 / 27 / NCTC 11736).